Reading from the N-terminus, the 85-residue chain is MFVRSLFLALLLATIVAADIDFSTCARMDVPILKKAAQGLCITSCSMQNCGTGSCKKRSGRPTCVCYRCANGGGDIPLGALIKRG.

The N-terminal stretch at 1–17 (MFVRSLFLALLLATIVA) is a signal peptide. The propeptide occupies 82–85 (IKRG).

As to expression, expressed in the pharynx (at protein level). Detected in pharyngeal neurons and secretory cells.

The protein resides in the secreted. Its function is as follows. Exhibits antimicrobial activity against the Gram-positive bacteria B.subtilis IFO 3134, K.varians MAFF 118076 and S.aureus ATCC 6538P, the Gram-negative bacteria A.tumefaciens MAFF 1001, B.bacteriovorus MAFF 106101 and K.pneumoniae MAFF 519002, and the yeasts C.krusei MAFF 114085, K.thermotolerans MAFF 113848 and T.delbrueckii MAFF 113811. In Caenorhabditis elegans, this protein is Antibacterial factor-related peptide 2.